The following is a 196-amino-acid chain: HTH-type transcriptional regulator EcpR (196 aa).

The 59-residue stretch at 138 to 196 (KDIKKDKITDREMEIIRMTAQGMQPKSIARIENCSVKTVYTHRRNAEAKLYSKIYKLVQ) folds into the HTH luxR-type domain. Residues 162 to 181 (PKSIARIENCSVKTVYTHRR) constitute a DNA-binding region (H-T-H motif).

The protein belongs to the EcpR/MatA family.

Its subcellular location is the cytoplasm. Functionally, part of the ecpRABCDE operon, which encodes the E.coli common pilus (ECP). ECP is found in both commensal and pathogenic strains and plays a dual role in early-stage biofilm development and host cell recognition. Positively regulates the expression of the ecp operon. In Escherichia coli O139:H28 (strain E24377A / ETEC), this protein is HTH-type transcriptional regulator EcpR (ecpR).